Reading from the N-terminus, the 360-residue chain is Phospho-N-acetylmuramoyl-pentapeptide-transferase (360 aa).

Helical transmembrane passes span 27-47, 70-90, 93-113, 134-154, 168-188, 205-225, 239-259, 262-282, 288-308, and 337-357; these read GALITAAFIVFLFGPAIISSL, GTPTMGGLMIFSGILGSSILW, LSSVYVWVVLMVMVGFGAIGF, LALEFVIAGFAAWIIMSAGQE, LLLNLGIFFIPFAAFVIVGAG, VMVAAASFGVIAYLSGNAIFA, LSVILGAVIGAGLGFLWFNAP, AIFMGDTGSLALGGLIGTVAV, IVLAIIGGLFVIEILSVIIQV, and QVVIRFWIIAVVLALIGLSTL.

The protein belongs to the glycosyltransferase 4 family. MraY subfamily. Mg(2+) is required as a cofactor.

It is found in the cell inner membrane. It catalyses the reaction UDP-N-acetyl-alpha-D-muramoyl-L-alanyl-gamma-D-glutamyl-meso-2,6-diaminopimeloyl-D-alanyl-D-alanine + di-trans,octa-cis-undecaprenyl phosphate = di-trans,octa-cis-undecaprenyl diphospho-N-acetyl-alpha-D-muramoyl-L-alanyl-D-glutamyl-meso-2,6-diaminopimeloyl-D-alanyl-D-alanine + UMP. The protein operates within cell wall biogenesis; peptidoglycan biosynthesis. In terms of biological role, catalyzes the initial step of the lipid cycle reactions in the biosynthesis of the cell wall peptidoglycan: transfers peptidoglycan precursor phospho-MurNAc-pentapeptide from UDP-MurNAc-pentapeptide onto the lipid carrier undecaprenyl phosphate, yielding undecaprenyl-pyrophosphoryl-MurNAc-pentapeptide, known as lipid I. This chain is Phospho-N-acetylmuramoyl-pentapeptide-transferase, found in Chelativorans sp. (strain BNC1).